Reading from the N-terminus, the 459-residue chain is Asperlicin C monooxygenase (459 aa).

D49, A62, and R121 together coordinate FAD. Residue R199 is part of the active site. FAD contacts are provided by D323 and A336.

The protein belongs to the paxM FAD-dependent monooxygenase family. It depends on FAD as a cofactor.

It catalyses the reaction asperlicin C + NADPH + O2 + H(+) = asperlicin E + NADP(+) + H2O. It carries out the reaction asperlicin C + NADH + O2 + H(+) = asperlicin E + NAD(+) + H2O. Catalyzes the conversion of asperlicin A to form asperlicin E, a potent cholecystokinin receptor CCK(A) antagonist. This is Asperlicin C monooxygenase from Petromyces alliaceus (Aspergillus alliaceus).